A 473-amino-acid chain; its full sequence is ATP synthase subunit beta (473 aa).

An ATP-binding site is contributed by 153 to 160 (GGAGVGKT).

It belongs to the ATPase alpha/beta chains family. As to quaternary structure, F-type ATPases have 2 components, CF(1) - the catalytic core - and CF(0) - the membrane proton channel. CF(1) has five subunits: alpha(3), beta(3), gamma(1), delta(1), epsilon(1). CF(0) has three main subunits: a(1), b(2) and c(9-12). The alpha and beta chains form an alternating ring which encloses part of the gamma chain. CF(1) is attached to CF(0) by a central stalk formed by the gamma and epsilon chains, while a peripheral stalk is formed by the delta and b chains.

It is found in the cell inner membrane. It carries out the reaction ATP + H2O + 4 H(+)(in) = ADP + phosphate + 5 H(+)(out). In terms of biological role, produces ATP from ADP in the presence of a proton gradient across the membrane. The catalytic sites are hosted primarily by the beta subunits. This chain is ATP synthase subunit beta, found in Rickettsia bellii (strain RML369-C).